The chain runs to 553 residues: Transcription factor GAMYB (553 aa).

A compositionally biased stretch (basic and acidic residues) spans methionine 1 to glutamine 17. The disordered stretch occupies residues methionine 1–tryptophan 45. The span at serine 27–proline 38 shows a compositional bias: gly residues. 2 HTH myb-type domains span residues glycine 37–leucine 89 and arginine 90–glutamine 144. 2 consecutive DNA-binding regions (H-T-H motif) follow at residues tryptophan 65–leucine 89 and tryptophan 117–isoleucine 140. Positions proline 464–histidine 489 are disordered.

Interacts with MYBS1. In terms of tissue distribution, expressed in aleurone cells, inflorescence shoot apical region, stamen primordia, and tapetum cells of the anther. Expressed at low level in roots and vegetative shoots.

The protein resides in the nucleus. In terms of biological role, transcriptional activator of gibberellin-dependent alpha-amylase expression in aleurone cells. Involved in pollen and floral organs development. May bind to the 5'-TAACAAA-3' box of alpha-amylase promoter. Required for anther development. Functions in parallel with UDT1 to regulate early anther development. Functions upstream of the transcription factor TDR and may positively regulate its transcription. Required for pollen development. Probably required for controlling tapetal cell size and promoting tapetal programmed cell death (PCD) during anther development. Required for exine and Ubisch body formation in anthers. Interacts with the DNA specific motifs of giberrellin-up-regulated genes of anthers and regulates their expression. Positively regulates the expression of the laurate hydroxylase CYP703A3, known to be essential for the development of pollen exine and anther epicuticular layer. Functions with MYBS1 to integrate diverse nutrient starvation and gibberellin (GA) signaling pathways during germination of grains. Sugar, nitrogen and phosphate starvation signals converge and interconnect with GA to promote the co-nuclear import of GAMYB and MYBS1, resulting in the expression of a large set of GA-inducible hydrolases, transporters and regulators that are essential for mobilization of nutrient reserves in the endosperm to support seedling growth. This is Transcription factor GAMYB from Oryza sativa subsp. japonica (Rice).